Reading from the N-terminus, the 354-residue chain is Probable cinnamyl alcohol dehydrogenase 1 (354 aa).

Zn(2+) is bound at residue C47. S49 lines the NADP(+) pocket. Residues H69, E70, C100, C103, C106, C114, and C163 each coordinate Zn(2+). NADP(+) is bound by residues T167, 188–193, 211–216, T251, G275, and 296–298; these read GLGGVG, SSSDKK, and SFI.

This sequence belongs to the zinc-containing alcohol dehydrogenase family. Homodimer. Zn(2+) serves as cofactor.

It catalyses the reaction (E)-cinnamyl alcohol + NADP(+) = (E)-cinnamaldehyde + NADPH + H(+). The enzyme catalyses (E)-coniferol + NADP(+) = (E)-coniferaldehyde + NADPH + H(+). It carries out the reaction (E)-sinapyl alcohol + NADP(+) = (E)-sinapaldehyde + NADPH + H(+). The catalysed reaction is (E)-4-coumaroyl alcohol + NADP(+) = (E)-4-coumaraldehyde + NADPH + H(+). It catalyses the reaction (E)-caffeyl alcohol + NADP(+) = (E)-caffeyl aldehyde + NADPH + H(+). It functions in the pathway aromatic compound metabolism; phenylpropanoid biosynthesis. Involved in lignin biosynthesis. Catalyzes the final step specific for the production of lignin monomers. Catalyzes the NADPH-dependent reduction of coniferaldehyde, 5-hydroxyconiferaldehyde, sinapaldehyde, 4-coumaraldehyde and caffeyl aldehyde to their respective alcohols. The sequence is that of Probable cinnamyl alcohol dehydrogenase 1 (CAD1) from Eucalyptus gunnii (Cider gum).